The primary structure comprises 464 residues: Argininosuccinate lyase (464 aa).

This sequence belongs to the lyase 1 family. Argininosuccinate lyase subfamily.

The protein resides in the cytoplasm. The enzyme catalyses 2-(N(omega)-L-arginino)succinate = fumarate + L-arginine. It participates in amino-acid biosynthesis; L-arginine biosynthesis; L-arginine from L-ornithine and carbamoyl phosphate: step 3/3. The chain is Argininosuccinate lyase from Pseudomonas aeruginosa (strain LESB58).